The following is a 254-amino-acid chain: Putative ankyrin-containing lipoprotein Lxx09580 (254 aa).

The N-terminal stretch at 1-22 is a signal peptide; it reads MTEIRYVRLLTLVLASSVLLAG. A lipid anchor (N-palmitoyl cysteine) is attached at cysteine 23. The S-diacylglycerol cysteine moiety is linked to residue cysteine 23. ANK repeat units follow at residues 56 to 85, 89 to 118, 122 to 151, 155 to 184, and 188 to 222; these read AATA…AIED, GGRT…DVNA, IQDS…DVNA, FNGT…DLDH, and PGWT…NPDI.

It is found in the cell membrane. The sequence is that of Putative ankyrin-containing lipoprotein Lxx09580 from Leifsonia xyli subsp. xyli (strain CTCB07).